The primary structure comprises 548 residues: Sterol esterase TGL1 (548 aa).

The residue at position 1 (M1) is an N-acetylmethionine; partial. The Lumenal portion of the chain corresponds to 1 to 13 (MYFPFLGRLSITD). A helical transmembrane segment spans residues 14-34 (YIIVVLVYIESIISSVLKLIP). Topologically, residues 35–548 (QPMINLFEWL…TTALDALNKE (514 aa)) are cytoplasmic. The AB hydrolase-1 domain maps to 107–402 (VVYLHHGLLM…NYEHLDLIWG (296 aa)). Residues 199-203 (GFSQG) carry the GXSXG motif. The active-site Nucleophile is S201. K246 participates in a covalent cross-link: Glycyl lysine isopeptide (Lys-Gly) (interchain with G-Cter in ubiquitin). Catalysis depends on charge relay system residues D369 and H396. 2 disordered regions span residues 449 to 477 (TTHP…EADE) and 496 to 516 (IDED…HKEQ). Residues S462 and S466 each carry the phosphoserine modification. A compositionally biased stretch (basic and acidic residues) spans 502–516 (NEHQDDTEDQIHKEQ). A phosphoserine mark is found at S521 and S538. The disordered stretch occupies residues 528–548 (KDLRQLDANSSTTALDALNKE). The residue at position 539 (T539) is a Phosphothreonine.

This sequence belongs to the AB hydrolase superfamily. Not N-glycosylated.

It localises to the lipid droplet. The protein resides in the membrane. It catalyses the reaction a sterol ester + H2O = a sterol + a fatty acid + H(+). Its function is as follows. Mediates the hydrolysis of steryl esters (SE). Preferentially hydrolyzes ergosteryl and zymosteryl esters. Required for mobilization of SEs from lipid particles/droplets, thereby playing a central role in lipid metabolism and sterol homeostasis. Sterol intermediates stored in SE and set free by SE hydrolases are recycled to the sterol biosynthetic pathway and converted to the final product, ergosterol, in the endoplasmic reticulum. Also has weak lipase activity toward triglycerides at neutral pH, however, the physiological relevance of this activity is unclear. The polypeptide is Sterol esterase TGL1 (TGL1) (Saccharomyces cerevisiae (strain ATCC 204508 / S288c) (Baker's yeast)).